A 392-amino-acid chain; its full sequence is Small ribosomal subunit protein bS1 (392 aa).

S1 motif domains are found at residues 16–90 (GDKV…LSKR), 108–173 (DEVI…LSRK), 194–262 (GDVI…LSIK), and 279–348 (DDVI…LSIK). The disordered stretch occupies residues 361-380 (ASTTQSYLEDDNDEDKPTLG).

The protein belongs to the bacterial ribosomal protein bS1 family.

In terms of biological role, binds mRNA; thus facilitating recognition of the initiation point. It is needed to translate mRNA with a short Shine-Dalgarno (SD) purine-rich sequence. In Staphylococcus epidermidis (strain ATCC 35984 / DSM 28319 / BCRC 17069 / CCUG 31568 / BM 3577 / RP62A), this protein is Small ribosomal subunit protein bS1 (rpsA).